The following is a 190-amino-acid chain: MDHSHHMGMSYMDSNSTMQPSHHHPTTSASHSHGGGDSSMMMMPMTFYFGFKNVELLFSGLVINTAGEMAGAFVAVFLLAMFYEGLKIARESLLRKSQVSIRYNSMPVPGPNGTILMETHKTVGQQMLSFPHLLQTVLHIIQVVISYFLMLIFMTYNGYLCIAVAAGAGTGYFLFSWKKAVVVDITEHCH.

A disordered region spans residues 1–35 (MDHSHHMGMSYMDSNSTMQPSHHHPTTSASHSHGG). Residues 1-61 (MDHSHHMGMS…KNVELLFSGL (61 aa)) lie on the Extracellular side of the membrane. Residues 5 to 6 (HH) carry the Bis-His motif motif. Residues 7–12 (MGMSYM) carry the Methionine segments (Mets) motif motif. N-linked (GlcNAc...) asparagine glycosylation is present at N15. The segment covering 26 to 35 (TTSASHSHGG) has biased composition (low complexity). T27 carries O-linked (GalNAc...) threonine glycosylation. Residues 62–82 (VINTAGEMAGAFVAVFLLAMF) form a helical membrane-spanning segment. Topologically, residues 83 to 132 (YEGLKIARESLLRKSQVSIRYNSMPVPGPNGTILMETHKTVGQQMLSFPH) are cytoplasmic. A Phosphothreonine modification is found at T114. A helical transmembrane segment spans residues 133–153 (LLQTVLHIIQVVISYFLMLIF). Residues 154 to 156 (MTY) are Extracellular-facing. The helical transmembrane segment at 157-177 (NGYLCIAVAAGAGTGYFLFSW) threads the bilayer. At 178-190 (KKAVVVDITEHCH) the chain is on the cytoplasmic side. A Cysteine sulfenic acid (-SOH) modification is found at C189.

The protein belongs to the copper transporter (Ctr) (TC 1.A.56) family. SLC31A subfamily. Homotrimer; is stabilized by cisplatin via interactions between cisplatin and the methionine-rich clusters, and could be crucial for the copper(2+) reduction process and copper(1+) stabilization. Heterotrimer between SLC31A1, CCS and SOD1; this heterotrimer is copper(1+)-mediated and its maintenance is regulated through SOD1 activation. Interacts with KDR; this interaction is induced upon VEGFA stimulation leading to SLC31A1 and KDR subsequent co-internalization to early endosomes, thereby activating KDR downstream signaling in endothelial cells. Interacts (via C-terminal domain) with ATOX1 (via dimer form); this interaction improves ATOX1 stability and controls intracellular copper(1+) levels. Interacts with SLC31A2; this interaction stabilizes SLC31A2 and protects its from ubiquitination and degradation. Interacts (via C-terminal domain) with CCS; this interaction is copper(1+)-mediated. In terms of processing, O-Glycosylation at Thr-27 protects from proteolytic cleavage in the N-terminal extracellular domain. Proteolytic cleavage, leading to a truncated form, is facilitated by SLC31A2 and initiated preferentially by CTSL and to a minor extend by CTSB in endolysosomal compartments. In vitro, is cleaved by CTSL/cathepsin L between residues 8 and 9 from the amino terminus. A post-CTSL/cathepsin L processing occurs to yield to the fully truncated form. Post-translationally, sulfenylated at Cys-189 after stimulation with VEGFA, which induces SLC31A1-KDR disulfide bond formation and their co-internalization to early endosomes, driving to a sustained VEGFR2 signaling.

Its subcellular location is the cell membrane. It localises to the early endosome membrane. The protein resides in the recycling endosome membrane. The protein localises to the apical cell membrane. It is found in the late endosome membrane. Its subcellular location is the basolateral cell membrane. The enzyme catalyses Ag(+)(out) = Ag(+)(in). It carries out the reaction Cu(+)(out) = Cu(+)(in). Copper(1+) transport is stimulated by extracellular acidic pH and high potassium ions concentrations. Copper(1+) import is regulated by a copper(1+)-dependent recycling of SLC31A1. Functionally, uniporter that mediates the transport of copper(1+) from the extracellular space to the cytoplasm, across the plasma membrane and delivers directly copper(1+) to specific chaperone such as ATOX1, via a copper(1+)- mediated transient interaction between the C-terminal domain and a copper(1+) chaperone, thus controlling intracellular copper(1+) levels. May function in copper(1+) import from the apical membrane thus may drive intestinal copper absorption. The copper(1+) transport mechanism is sodium-independent, saturable and of high-affinity. Also mediates the uptake of silver(1+). May function in the influx of the platinum-containing chemotherapeutic agents. The platinum-containing chemotherapeutic agents uptake is saturable. In vitro, mediates the transport of cadmium(2+) into cells. Also participates in the first step of copper(2+) acquisition by cells through a direct transfer of copper(2+) from copper(2+) carriers in blood, such as ALB to the N-terminal domain of SLC31A1, leading to copper(2+) reduction and probably followed by copper(1+) stabilization. In addition, functions as a redox sensor to promote angiogenesis in endothelial cells, in a copper(1+) transport independent manner, by transmitting the VEGF-induced ROS signal through a sulfenylation at Cys-189 leadin g to a subsequent disulfide bond formation between SLC31A1 and KDR. The SLC31A1-KDR complex is then co-internalized to early endosomes, driving a sustained VEGFR2 signaling. Its function is as follows. Mobilizes copper(1+) out of the endosomal compartment, making copper(1+) available for export out of the cells. The protein is High affinity copper uptake protein 1 of Homo sapiens (Human).